Reading from the N-terminus, the 426-residue chain is Glutamate-1-semialdehyde 2,1-aminomutase (426 aa).

N6-(pyridoxal phosphate)lysine is present on K265.

The protein belongs to the class-III pyridoxal-phosphate-dependent aminotransferase family. HemL subfamily. As to quaternary structure, homodimer. The cofactor is pyridoxal 5'-phosphate.

It localises to the cytoplasm. The catalysed reaction is (S)-4-amino-5-oxopentanoate = 5-aminolevulinate. It participates in porphyrin-containing compound metabolism; protoporphyrin-IX biosynthesis; 5-aminolevulinate from L-glutamyl-tRNA(Glu): step 2/2. In Escherichia coli O7:K1 (strain IAI39 / ExPEC), this protein is Glutamate-1-semialdehyde 2,1-aminomutase.